A 222-amino-acid polypeptide reads, in one-letter code: E3 ubiquitin-protein ligase RNF138 (222 aa).

The segment at 17–57 (CPVCQEILQTPVRTQTCRHVFCRKCFMLAMKSGGAYCPLCR) adopts an RING-type zinc-finger fold. Residues Cys-85, Cys-88, His-100, and Cys-104 each coordinate Zn(2+). A C2HC RNF-type zinc finger spans residues 85–104 (CMYCGKMMKLHYMKLHYKSC). 2 consecutive C2H2-type zinc fingers follow at residues 134–157 (YKCP…NNVH) and 164–192 (MVCP…NARH). A UIM domain is found at 202-220 (INIDEEAQFQIAVANSYKI).

In terms of assembly, interacts with nlk.2 (via C-terminus) and ube2k. Post-translationally, auto-ubiquitinated.

It localises to the chromosome. The catalysed reaction is S-ubiquitinyl-[E2 ubiquitin-conjugating enzyme]-L-cysteine + [acceptor protein]-L-lysine = [E2 ubiquitin-conjugating enzyme]-L-cysteine + N(6)-ubiquitinyl-[acceptor protein]-L-lysine.. It functions in the pathway protein modification; protein ubiquitination. In terms of biological role, E3 ubiquitin-protein ligase involved in DNA damage response by promoting DNA resection and homologous recombination. Recruited to sites of double-strand breaks following DNA damage and specifically promotes double-strand break repair via homologous recombination. Together with nlk.2, involved in the ubiquitination and degradation of TCF/LEF. Also exhibits auto-ubiquitination activity in combination with ube2k. May act as a negative regulator in the Wnt/beta-catenin-mediated signaling pathway. In Xenopus laevis (African clawed frog), this protein is E3 ubiquitin-protein ligase RNF138 (rnf138).